We begin with the raw amino-acid sequence, 390 residues long: Chorismate synthase 1 (390 aa).

Residues Arg-39 and Arg-45 each coordinate NADP(+). The interval 95 to 117 is disordered; sequence EQEEKEMKRKVTKPRPGHADLNG. FMN contacts are provided by residues 132-134, 253-254, Gly-298, 313-317, and Arg-339; these read RSS, NA, and KPIPT.

This sequence belongs to the chorismate synthase family. Homotetramer. FMNH2 is required as a cofactor.

It catalyses the reaction 5-O-(1-carboxyvinyl)-3-phosphoshikimate = chorismate + phosphate. It participates in metabolic intermediate biosynthesis; chorismate biosynthesis; chorismate from D-erythrose 4-phosphate and phosphoenolpyruvate: step 7/7. Catalyzes the anti-1,4-elimination of the C-3 phosphate and the C-6 proR hydrogen from 5-enolpyruvylshikimate-3-phosphate (EPSP) to yield chorismate, which is the branch point compound that serves as the starting substrate for the three terminal pathways of aromatic amino acid biosynthesis. This reaction introduces a second double bond into the aromatic ring system. The chain is Chorismate synthase 1 from Bacillus cereus (strain ATCC 10987 / NRS 248).